A 189-amino-acid polypeptide reads, in one-letter code: CASP-like protein 1U2 (189 aa).

Residues Met1–Lys24 lie on the Cytoplasmic side of the membrane. The chain crosses the membrane as a helical span at residues Ala25–Met45. The Extracellular segment spans residues Ala46 to Pro71. Residues Phe72–Val92 form a helical membrane-spanning segment. Topologically, residues Gln93–Val109 are cytoplasmic. Residues Val110–Phe130 traverse the membrane as a helical segment. The Extracellular segment spans residues Ala131 to Lys158. The helical transmembrane segment at Ile159–Leu179 threads the bilayer. Over Pro180–Ser189 the chain is Cytoplasmic.

It belongs to the Casparian strip membrane proteins (CASP) family. In terms of assembly, homodimer and heterodimers.

Its subcellular location is the cell membrane. The sequence is that of CASP-like protein 1U2 from Sorghum bicolor (Sorghum).